A 274-amino-acid polypeptide reads, in one-letter code: Diaminopimelate epimerase (274 aa).

Positions 11, 44, and 64 each coordinate substrate. Residue Cys73 is the Proton donor of the active site. Substrate contacts are provided by residues 74 to 75, Asn157, Asn190, and 208 to 209; these read GN and ER. Residue Cys217 is the Proton acceptor of the active site. 218 to 219 is a substrate binding site; that stretch reads GS.

Belongs to the diaminopimelate epimerase family. Homodimer.

The protein resides in the cytoplasm. It catalyses the reaction (2S,6S)-2,6-diaminopimelate = meso-2,6-diaminopimelate. Its pathway is amino-acid biosynthesis; L-lysine biosynthesis via DAP pathway; DL-2,6-diaminopimelate from LL-2,6-diaminopimelate: step 1/1. In terms of biological role, catalyzes the stereoinversion of LL-2,6-diaminopimelate (L,L-DAP) to meso-diaminopimelate (meso-DAP), a precursor of L-lysine and an essential component of the bacterial peptidoglycan. This Escherichia coli O6:H1 (strain CFT073 / ATCC 700928 / UPEC) protein is Diaminopimelate epimerase.